The primary structure comprises 497 residues: Arabinose import ATP-binding protein AraG (497 aa).

ABC transporter domains lie at 6–242 (LRFD…MVGR) and 250–497 (FRPR…ALPA). Residue 38-45 (GENGAGKS) participates in ATP binding.

Belongs to the ABC transporter superfamily. Arabinose importer (TC 3.A.1.2.2) family. In terms of assembly, the complex is composed of two ATP-binding proteins (AraG), two transmembrane proteins (AraH) and a solute-binding protein (AraF).

The protein localises to the cell inner membrane. The enzyme catalyses L-arabinose(out) + ATP + H2O = L-arabinose(in) + ADP + phosphate + H(+). Its function is as follows. Part of the ABC transporter complex AraFGH involved in arabinose import. Responsible for energy coupling to the transport system. This is Arabinose import ATP-binding protein AraG from Chromohalobacter salexigens (strain ATCC BAA-138 / DSM 3043 / CIP 106854 / NCIMB 13768 / 1H11).